A 1211-amino-acid polypeptide reads, in one-letter code: Periplasmic acid trehalase ATC1 (1211 aa).

Topologically, residues M1–D46 are cytoplasmic. A helical membrane pass occupies residues L47 to L67. Residues Y68–D1211 are Periplasmic-facing. The interval T70–M131 is required for cell surface targeting. N-linked (GlcNAc...) asparagine glycans are attached at residues N98, N207, N238, N247, N255, N259, N325, N370, N376, and N488. Position 513–514 (W513–D514) interacts with substrate. 4 N-linked (GlcNAc...) asparagine glycosylation sites follow: N539, N568, N628, and N638. E644 acts as the Proton donor in catalysis. Residues N696 and N705 are each glycosylated (N-linked (GlcNAc...) asparagine). Residue K711–Q712 coordinates substrate. Residues N879, N897, N910, N972, N990, N1031, N1049, N1064, N1147, and N1157 are each glycosylated (N-linked (GlcNAc...) asparagine).

This sequence belongs to the glycosyl hydrolase 65 family. Glycosylated.

It is found in the membrane. The protein resides in the vacuole lumen. The protein localises to the periplasm. It catalyses the reaction alpha,alpha-trehalose + H2O = alpha-D-glucose + beta-D-glucose. Periplasmic acid trehalase that catalyzes hydrolysis of the disaccharide trehalose and required for growth on trehalose as carbon source. Growth on trehalose is strictly respiratory. The polypeptide is Periplasmic acid trehalase ATC1 (Saccharomyces cerevisiae (strain CEN.PK113-7D) (Baker's yeast)).